A 315-amino-acid chain; its full sequence is Acetaldehyde dehydrogenase 1 (315 aa).

Position 12–15 (12–15 (SGNI)) interacts with NAD(+). Residue Cys-132 is the Acyl-thioester intermediate of the active site. Residues 163 to 171 (SAGPGTRAN) and Asn-291 contribute to the NAD(+) site.

This sequence belongs to the acetaldehyde dehydrogenase family.

It catalyses the reaction acetaldehyde + NAD(+) + CoA = acetyl-CoA + NADH + H(+). This Paraburkholderia phymatum (strain DSM 17167 / CIP 108236 / LMG 21445 / STM815) (Burkholderia phymatum) protein is Acetaldehyde dehydrogenase 1.